We begin with the raw amino-acid sequence, 307 residues long: Pyridoxal 5'-phosphate synthase subunit PdxS (307 aa).

Positions 1-10 are enriched in basic residues; it reads MRGQPRPKLR. Residues 1 to 20 are disordered; the sequence is MRGQPRPKLRRMTEQQTGTP. Asp37 is a binding site for D-ribose 5-phosphate. Lys94 (schiff-base intermediate with D-ribose 5-phosphate) is an active-site residue. Gly166 contacts D-ribose 5-phosphate. Arg178 provides a ligand contact to D-glyceraldehyde 3-phosphate. Residues Gly227 and 248–249 each bind D-ribose 5-phosphate; that span reads GS.

The protein belongs to the PdxS/SNZ family. In terms of assembly, in the presence of PdxT, forms a dodecamer of heterodimers.

It carries out the reaction aldehydo-D-ribose 5-phosphate + D-glyceraldehyde 3-phosphate + L-glutamine = pyridoxal 5'-phosphate + L-glutamate + phosphate + 3 H2O + H(+). The protein operates within cofactor biosynthesis; pyridoxal 5'-phosphate biosynthesis. Functionally, catalyzes the formation of pyridoxal 5'-phosphate from ribose 5-phosphate (RBP), glyceraldehyde 3-phosphate (G3P) and ammonia. The ammonia is provided by the PdxT subunit. Can also use ribulose 5-phosphate and dihydroxyacetone phosphate as substrates, resulting from enzyme-catalyzed isomerization of RBP and G3P, respectively. This Deinococcus radiodurans (strain ATCC 13939 / DSM 20539 / JCM 16871 / CCUG 27074 / LMG 4051 / NBRC 15346 / NCIMB 9279 / VKM B-1422 / R1) protein is Pyridoxal 5'-phosphate synthase subunit PdxS.